We begin with the raw amino-acid sequence, 1089 residues long: Protein phosphatase 1 regulatory subunit 3A (1089 aa).

The segment at 32-57 (KATFKPGFSPQPSRRGSGSSEDMYLD) is disordered. Low complexity predominate over residues 37–51 (PGFSPQPSRRGSGSS). A phosphoserine; by GSK3 mark is found at S40 and S44. A phosphoserine mark is found at S48 and S51. At T58 the chain carries Phosphothreonine. The short motif at 64 to 67 (RRVS) is the PP1-binding motif element. S67 bears the Phosphoserine; by PKA mark. One can recognise a CBM21 domain in the interval 123–231 (EQLQVQKAVL…NNNGTNYILV (109 aa)). Disordered stretches follow at residues 385-420 (FYHS…GDTS), 479-501 (HGDS…KVDN), and 566-649 (PCPS…SDIA). Over residues 581 to 600 (SGSNLEPGTSDLSSPRNFSP) the composition is skewed to polar residues. A compositionally biased stretch (basic and acidic residues) spans 602–614 (TDDHLFQADRENS). Over residues 615–625 (DSSNPENQNMN) the composition is skewed to polar residues. A Phosphoserine modification is found at S821. Residues 949–968 (IMKSGSGGERGGGPILQQKE) are disordered. Residues 953-962 (GSGGERGGGP) are compositionally biased toward gly residues. Residues 1047-1067 (LLFLIFLATVYYYDLMIGLAF) form a helical membrane-spanning segment.

As to quaternary structure, interacts with PPP1CC catalytic subunit of PP1, and associates with glycogen. Phosphorylation at Ser-48 by ISPK stimulates the dephosphorylation of glycogen synthase and phosphorylase kinase. As to expression, skeletal muscle and heart.

The protein localises to the membrane. Its function is as follows. Seems to act as a glycogen-targeting subunit for PP1. PP1 is essential for cell division, and participates in the regulation of glycogen metabolism, muscle contractility and protein synthesis. Plays an important role in glycogen synthesis but is not essential for insulin activation of glycogen synthase. This is Protein phosphatase 1 regulatory subunit 3A (Ppp1r3a) from Mus musculus (Mouse).